Consider the following 543-residue polypeptide: Tetrahydroberberine oxidase (543 aa).

A signal peptide spans methionine 1–alanine 26. A disulfide bridge connects residues cysteine 37 and cysteine 97. 9 N-linked (GlcNAc...) asparagine glycosylation sites follow: asparagine 54, asparagine 74, asparagine 135, asparagine 142, asparagine 162, asparagine 295, asparagine 335, asparagine 440, and asparagine 482. The FAD-binding PCMH-type domain occupies serine 75 to valine 250. A cross-link (6-(S-cysteinyl)-8alpha-(pros-histidyl)-FAD (His-Cys)) is located at residues histidine 112–cysteine 175.

Belongs to the oxygen-dependent FAD-linked oxidoreductase family. FAD serves as cofactor. In terms of processing, the FAD cofactor is bound via a bicovalent 6-S-cysteinyl, 8alpha-N1-histidyl FAD linkage.

It catalyses the reaction (S)-canadine + 2 O2 + H(+) = berberine + 2 H2O2. Catalyzes the oxidation of different tetrahydroprotoberberines, such as (S)-canadine, (S)-scoulerine and (S)-tetrahydropalmatine. The chain is Tetrahydroberberine oxidase from Argemone mexicana (Mexican prickly poppy).